The sequence spans 171 residues: Large ribosomal subunit protein bL9 (171 aa).

This sequence belongs to the bacterial ribosomal protein bL9 family.

Its function is as follows. Binds to the 23S rRNA. This is Large ribosomal subunit protein bL9 from Orientia tsutsugamushi (strain Ikeda) (Rickettsia tsutsugamushi).